Consider the following 860-residue polypeptide: Semaphorin-3aa (860 aa).

The first 17 residues, 1-17 (MDYLVGIFLLLCGVALP), serve as a signal peptide directing secretion. The 485-residue stretch at 31 to 515 (RLKLSYNEML…SDLGISQMPL (485 aa)) folds into the Sema domain. Residue Asn-53 is glycosylated (N-linked (GlcNAc...) asparagine). Residues Cys-104 and Cys-115 are joined by a disulfide bond. An N-linked (GlcNAc...) asparagine glycan is attached at Asn-126. 4 disulfide bridges follow: Cys-133-Cys-142, Cys-270-Cys-382, Cys-294-Cys-342, and Cys-518-Cys-536. Residues 579 to 668 (GYSSVEERSV…FIQPLRRINL (90 aa)) form the Ig-like C2-type domain. Residue Asn-593 is glycosylated (N-linked (GlcNAc...) asparagine). Cysteines 652 and 717 form a disulfide. The tract at residues 725–860 (KKPKGKKAPK…HEQQRPPRSV (136 aa)) is disordered. 2 stretches are compositionally biased toward polar residues: residues 748 to 764 (TPQT…QRAQ) and 782 to 818 (TGLQ…QPNQ). Residues 838-860 (QLQENKRGRNRRTHEQQRPPRSV) are compositionally biased toward basic and acidic residues.

The protein belongs to the semaphorin family.

It localises to the secreted. In terms of biological role, may influence outgrowth by a variety of growth cones including those of the posterior lateral line ganglion. The chain is Semaphorin-3aa (sema3aa) from Danio rerio (Zebrafish).